A 309-amino-acid polypeptide reads, in one-letter code: MKTIDLFAGCGGMSLGFMQAGFEIVAAVDNWRPAINTYQQNFTHPIHELDLAQIDAAVSLIKTHSPELIIGGPPCQDFSSAGKRDEGLGRANLTLDFAKIVLAIQPAWVIMENVERARLSKIHQQACSMLGDEGYSLAQVVLDASLCGVPQLRKRTFVIGHRHGSIADLANVLQQRLAKQSLTVRDYFGESLDTDYYYRHPRTYERRAIFSVNEPSPTIRGVNRPIPATYRMHPKDAGDVSLARPLTTKERSLIQTFPLDFKFVGTKSEQEQMIGNAVPVNLAFFLATSLQAYLNQPRMQQLSLLPSFF.

One can recognise an SAM-dependent MTase C5-type domain in the interval 1–297 (MKTIDLFAGC…TSLQAYLNQP (297 aa)). Residue cysteine 75 is part of the active site.

This sequence belongs to the class I-like SAM-binding methyltransferase superfamily. C5-methyltransferase family.

It carries out the reaction a 2'-deoxycytidine in DNA + S-adenosyl-L-methionine = a 5-methyl-2'-deoxycytidine in DNA + S-adenosyl-L-homocysteine + H(+). Its function is as follows. A methylase that recognizes the double-stranded sequence 5'-GRCGYC-3', methylates C-? on both strands, and protects the DNA from cleavage by the HgiDI endonuclease. This chain is Type II methyltransferase M.HgiDI, found in Herpetosiphon aurantiacus (Herpetosiphon giganteus).